The sequence spans 538 residues: Prickle planar cell polarity protein 3-A (538 aa).

A PET domain is found at 66-175; sequence SGSQRDSLCE…CVRPVSGTMS (110 aa). 3 consecutive LIM zinc-binding domains span residues 177–241, 242–302, and 305–366; these read TVCQ…ELKR, PRCL…LYAQ, and DSCG…NATP. Over residues 369-378 the composition is skewed to polar residues; the sequence is SFSPSQTDLS. 3 disordered regions span residues 369-398, 433-463, and 475-538; these read SFSP…DGDS, RGAP…TRVT, and SVSL…CLLS. A compositionally biased stretch (basic and acidic residues) spans 435–449; it reads APKEFSRECPNRRSL. Polar residues predominate over residues 451–463; the sequence is DLNSHTRTPTRVT. Low complexity-rich tracts occupy residues 475-488 and 514-523; these read SVSL…SSSS and APPTHAPTST.

It belongs to the prickle / espinas / testin family. As to quaternary structure, interacts with vangl2 via its C-terminus. The vangl2-dependent membrane recruitment of prickle3 is a prerequisite for its polarization. Interacts with wtip. Wtip is involved in the recruitment of prickle3 to the basal body. Predominantly expressed in the epidermal ectoderm.

Its subcellular location is the cytoplasm. It is found in the cell membrane. The protein localises to the mitochondrion. In terms of biological role, involved in the planar cell polarity (PCP) pathway that is essential for the polarization of epithelial cells during morphogenetic processes, including gastrulation and neurulation. PCP is maintained by two molecular modules, the global and the core modules. Proteins of the core module include the proteins Frizzled (Fz), Disheveled (Dsh), Van Gogh (Vang), Prickle (Pk), Flamingo (Fmi, Celsr) and Diego (Dgo). The core module proteins develop subcellular asymmetry, accumulating in two groups on opposite sides of epithelial cells. Distinct proximal (Vang, Pk and Fmi) and distal (Fz, Dsh, Dgo and Fmi) complexes segregate to opposite sides of the cell, where they interact with the opposite complex in the neighboring cell at or near the adherents junctions. Directional information to orient polarization with respect to the tissue axes is provided by the global module which involves Wnt proteins. Involved in the organization of the basal body. Involved in cilia growth and positioning. Required for proper assembly, stability, and function of mitochondrial membrane ATP synthase (mitochondrial complex V). This chain is Prickle planar cell polarity protein 3-A (prickle3-a), found in Xenopus laevis (African clawed frog).